The primary structure comprises 537 residues: Tyrosine-protein kinase Fyn (537 aa).

The N-myristoyl glycine moiety is linked to residue glycine 2. S-palmitoyl cysteine attachment occurs at residues cysteine 3 and cysteine 6. A disordered region spans residues 14–35; that stretch reads LTEERDGSLNQSSGYRYGTDPT. Phosphoserine is present on residues serine 21 and serine 26. The region spanning 82–143 is the SH3 domain; it reads TGVTLFVALY…PSNYVAPVDS (62 aa). The region spanning 149–246 is the SH2 domain; that stretch reads WYFGKLGRKD…GLCCRLVVPC (98 aa). Residue tyrosine 185 is modified to Phosphotyrosine. The 254-residue stretch at 271 to 524 folds into the Protein kinase domain; that stretch reads LQLIKRLGNG…YLQGFLEDYF (254 aa). ATP-binding positions include 277 to 285 and lysine 299; that span reads LGNGQFGEV. Aspartate 390 acts as the Proton acceptor in catalysis. Phosphotyrosine; by autocatalysis is present on tyrosine 420. Tyrosine 531 is modified (phosphotyrosine).

The protein belongs to the protein kinase superfamily. Tyr protein kinase family. SRC subfamily. As to quaternary structure, interacts (via its SH3 domain) with PIK3R1 and PRMT8. Interacts with FYB1, PAG1, and SH2D1A. Interacts with CD79A (tyrosine-phosphorylated form); the interaction increases FYN activity. Interacts (via SH2 domain) with CSF1R (tyrosine phosphorylated). Interacts with TOM1L1 (phosphorylated form). Interacts with KDR (tyrosine phosphorylated). Interacts (via SH3 domain) with KLHL2 (via N-terminus). Interacts with SH2D1A and SLAMF1. Interacts with ITCH; the interaction phosphorylates ITCH and negatively regulates its activity. Interacts with FASLG. Interacts with RUNX3. Interacts with KIT. Interacts with EPHA8; possible downstream effector of EPHA8 in regulation of cell adhesion. Interacts with PTK2/FAK1; this interaction leads to PTK2/FAK1 phosphorylation and activation. Interacts with CAV1; this interaction couples integrins to the Ras-ERK pathway. Interacts with UNC119. Interacts (via SH2 domain) with PTPRH (phosphorylated form). Interacts with PTPRO (phosphorylated form). Interacts with PTPRB (phosphorylated form). Interacts with FYB2. Interacts with DSCAM. Interacts with SKAP1 and FYB1; this interaction promotes the phosphorylation of CLNK. Interacts with NEDD9; in the presence of PTK2. It depends on Mn(2+) as a cofactor. In terms of processing, autophosphorylated at Tyr-420. Phosphorylation on the C-terminal tail at Tyr-531 by CSK maintains the enzyme in an inactive state. PTPRC/CD45 dephosphorylates Tyr-531 leading to activation. Dephosphorylation at Tyr-420 by PTPN2 negatively regulates T-cell receptor signaling. Phosphorylated at tyrosine residues, which can be enhanced by NTN1. Palmitoylated. Palmitoylation at Cys-3 and Cys-6, probably by ZDHHC21, regulates subcellular location. As to expression, detected in spinal cord oligodendrocytes (at protein level).

The protein localises to the cytoplasm. It is found in the nucleus. Its subcellular location is the cell membrane. It localises to the perikaryon. It carries out the reaction L-tyrosyl-[protein] + ATP = O-phospho-L-tyrosyl-[protein] + ADP + H(+). Its activity is regulated as follows. Inhibited by phosphorylation of Tyr-531 by leukocyte common antigen and activated by dephosphorylation of this site. In terms of biological role, non-receptor tyrosine-protein kinase that plays a role in many biological processes including regulation of cell growth and survival, cell adhesion, integrin-mediated signaling, cytoskeletal remodeling, cell motility, immune response and axon guidance. Inactive FYN is phosphorylated on its C-terminal tail within the catalytic domain. Following activation by PKA, the protein subsequently associates with PTK2/FAK1, allowing PTK2/FAK1 phosphorylation, activation and targeting to focal adhesions. Involved in the regulation of cell adhesion and motility through phosphorylation of CTNNB1 (beta-catenin) and CTNND1 (delta-catenin). Regulates cytoskeletal remodeling by phosphorylating several proteins including the actin regulator WAS and the microtubule-associated proteins MAP2 and MAPT. Promotes cell survival by phosphorylating AGAP2/PIKE-A and preventing its apoptotic cleavage. Participates in signal transduction pathways that regulate the integrity of the glomerular slit diaphragm (an essential part of the glomerular filter of the kidney) by phosphorylating several slit diaphragm components including NPHS1, KIRREL1 and TRPC6. Plays a role in neural processes by phosphorylating DPYSL2, a multifunctional adapter protein within the central nervous system, ARHGAP32, a regulator for Rho family GTPases implicated in various neural functions, and SNCA, a small pre-synaptic protein. Involved in reelin signaling by mediating phosphorylation of DAB1 following reelin (RELN)-binding to its receptor. Participates in the downstream signaling pathways that lead to T-cell differentiation and proliferation following T-cell receptor (TCR) stimulation. Phosphorylates PTK2B/PYK2 in response to T-cell receptor activation. Also participates in negative feedback regulation of TCR signaling through phosphorylation of PAG1, thereby promoting interaction between PAG1 and CSK and recruitment of CSK to lipid rafts. CSK maintains LCK and FYN in an inactive form. Promotes CD28-induced phosphorylation of VAV1. In mast cells, phosphorylates CLNK after activation of immunoglobulin epsilon receptor signaling. Can also promote CD244-mediated NK cell activation. This chain is Tyrosine-protein kinase Fyn, found in Rattus norvegicus (Rat).